Here is a 1228-residue protein sequence, read N- to C-terminus: ABC transporter B family member 16 (1228 aa).

The next 6 membrane-spanning stretches (helical) occupy residues 22–42 (MGLG…LFFI), 69–89 (LAML…GYCW), 145–167 (LPNI…MLLW), 171–193 (IVGF…ALIG), 251–271 (GIAI…TWYG), and 283–303 (GTVS…GQAL). Residues 22 to 311 (MGLGLIGAVG…ALSNLKYFSE (290 aa)) form the ABC transmembrane type-1 1 domain. One can recognise an ABC transporter 1 domain in the interval 346–582 (VEFNNVKCKY…DGKYTSLVRL (237 aa)). Residue 381 to 388 (GGSGSGKS) participates in ATP binding. 3 N-linked (GlcNAc...) asparagine glycosylation sites follow: Asn-529, Asn-593, and Asn-628. In terms of domain architecture, ABC transmembrane type-1 2 spans 658–946 (ALCGCLSASL…AGTMTTDLAK (289 aa)). 2 consecutive transmembrane segments (helical) span residues 667–687 (LGGA…SVFF) and 700–720 (IYVL…ISQQ). Residue Asn-755 is glycosylated (N-linked (GlcNAc...) asparagine). 2 helical membrane passes run 781-801 (LLVQ…VIAW) and 805-825 (IVMI…RVLL). N-linked (GlcNAc...) asparagine glycosylation occurs at Asn-827. The next 2 helical transmembrane spans lie at 881 to 901 (SWLA…TSAL) and 920 to 940 (FFEL…AGTM). The ABC transporter 2 domain occupies 981 to 1219 (ITFLNVDFAY…GPTGSYFSLV (239 aa)). A glycan (N-linked (GlcNAc...) asparagine) is linked at Asn-1001. Residue 1016–1023 (GPSRSGKS) coordinates ATP.

This sequence belongs to the ABC transporter superfamily. ABCB family. Multidrug resistance exporter (TC 3.A.1.201) subfamily.

The protein localises to the membrane. The chain is ABC transporter B family member 16 (ABCB16) from Arabidopsis thaliana (Mouse-ear cress).